A 492-amino-acid polypeptide reads, in one-letter code: Beta-glucosidase 38 (492 aa).

Residues 1–21 form the signal peptide; sequence MNMPLLLLIAIVVVSLSHGNG. Q45 serves as a coordination point for a beta-D-glucoside. N-linked (GlcNAc...) asparagine glycosylation is found at N73 and N77. Residues H146 and 191–192 each bind a beta-D-glucoside; that span reads NE. The Proton donor role is filled by E192. The cysteines at positions 211 and 214 are disulfide-linked. N310 is a glycosylation site (N-linked (GlcNAc...) asparagine). Residue Y331 coordinates a beta-D-glucoside. The N-linked (GlcNAc...) asparagine glycan is linked to N341. E400 is a binding site for a beta-D-glucoside. E400 acts as the Nucleophile in catalysis. N408 carries an N-linked (GlcNAc...) asparagine glycan. A beta-D-glucoside contacts are provided by residues W447, 454–455, and F463; that span reads EW.

This sequence belongs to the glycosyl hydrolase 1 family.

The enzyme catalyses Hydrolysis of terminal, non-reducing beta-D-glucosyl residues with release of beta-D-glucose.. This is Beta-glucosidase 38 (BGLU38) from Oryza sativa subsp. japonica (Rice).